We begin with the raw amino-acid sequence, 229 residues long: Protein-L-isoaspartate O-methyltransferase (229 aa).

S65 is an active-site residue.

This sequence belongs to the methyltransferase superfamily. L-isoaspartyl/D-aspartyl protein methyltransferase family.

It is found in the cytoplasm. It catalyses the reaction [protein]-L-isoaspartate + S-adenosyl-L-methionine = [protein]-L-isoaspartate alpha-methyl ester + S-adenosyl-L-homocysteine. Functionally, catalyzes the methyl esterification of L-isoaspartyl residues in peptides and proteins that result from spontaneous decomposition of normal L-aspartyl and L-asparaginyl residues. It plays a role in the repair and/or degradation of damaged proteins. The sequence is that of Protein-L-isoaspartate O-methyltransferase from Chlorobium phaeovibrioides (strain DSM 265 / 1930) (Prosthecochloris vibrioformis (strain DSM 265)).